A 314-amino-acid chain; its full sequence is Type II methyltransferase M.HpaI (314 aa).

It belongs to the N(4)/N(6)-methyltransferase family.

The catalysed reaction is a 2'-deoxyadenosine in DNA + S-adenosyl-L-methionine = an N(6)-methyl-2'-deoxyadenosine in DNA + S-adenosyl-L-homocysteine + H(+). Functionally, a beta subtype methylase that recognizes the double-stranded sequence 5'-GTTAAC-3', methylates A-5 on both strands, and protects the DNA from cleavage by the HpaI endonuclease. The chain is Type II methyltransferase M.HpaI (hpaIM) from Haemophilus parainfluenzae.